The primary structure comprises 581 residues: Pentatricopeptide repeat-containing protein At3g56550 (581 aa).

9 PPR repeats span residues 70–104 (STSD…SVSR), 106–140 (DLFT…GFLD), 141–171 (DAIV…MPVR), 172–206 (DLVS…GVCG), 207–241 (DSYT…RCES), 242–272 (CVFV…MRKR), 273–307 (DVLT…GVRP), 308–338 (NAIT…MSSQ), and 344–378 (NVKH…EDPV). A type E motif region spans residues 379–454 (LWRTLLGSCK…VPGWSWIEIG (76 aa)). The type E(+) motif stretch occupies residues 455 to 485 (DQVHKFVVDDKMHPESAVIYSELGEVINRAI). Residues 486–581 (LAGYKPEDSN…DGICSCNDYW (96 aa)) are type DYW motif.

Belongs to the PPR family. PCMP-H subfamily.

In Arabidopsis thaliana (Mouse-ear cress), this protein is Pentatricopeptide repeat-containing protein At3g56550 (PCMP-H80).